The primary structure comprises 84 residues: Esculentin-1ISb (84 aa).

Positions 1–22 are cleaved as a signal peptide; sequence MFTLKKPLLLIVLLGIISLSLC. A propeptide spans 23-36 (removed in mature form); sequence EQERAADEDEGTKI. Cysteines 78 and 84 form a disulfide.

In terms of tissue distribution, expressed by the skin glands.

It is found in the secreted. Its function is as follows. Has antimicrobial activity against Gram-negative bacterium E.coli ATCC 8739 (MIC=3.1 ug), against Gram positive bacteria S.aureus ATCC 6538 (MIC=3.1 ug), methicillin-resistant S.aureus ATCC 43300 (MIC=12.5 ug), B.subtilis ATCC 6633 (MIC=12.5 ug) and against fungus C.albicans ATCC 90028 (MIC=50 ug). The protein is Esculentin-1ISb of Odorrana ishikawae (Ishikawa's frog).